Reading from the N-terminus, the 248-residue chain is MTEATRILLGVNIDHVATLRQARGTRYPDPVKAALDAEEAGADGITVHLREDRRHIQERDVRMLKEVLQTRMNFEMGVTEEMLAFAEEIRPAHSCLVPERREELTTEGGLDVAGQEQRIRDAVRRLAAVGSEVSLFIDPDPRQIEASARVGAPAIELHTGRYADAENPGEQARELQRVREGVALGRSLGLIVNAGHGLHYHNVEPVAAIEGINELNIGHAIVAHALFVGFRQAVAEMKALMLAAAAKR.

Asparagine 12 contacts 3-amino-2-oxopropyl phosphate. 1-deoxy-D-xylulose 5-phosphate is bound at residue aspartate 14–histidine 15. Arginine 23 serves as a coordination point for 3-amino-2-oxopropyl phosphate. Residue histidine 48 is the Proton acceptor of the active site. 2 residues coordinate 1-deoxy-D-xylulose 5-phosphate: arginine 50 and histidine 55. The active-site Proton acceptor is the glutamate 75. Threonine 105 is a 1-deoxy-D-xylulose 5-phosphate binding site. The active-site Proton donor is the histidine 196. 3-amino-2-oxopropyl phosphate-binding positions include glycine 197 and glycine 218–histidine 219.

The protein belongs to the PNP synthase family. As to quaternary structure, homooctamer; tetramer of dimers.

It localises to the cytoplasm. The catalysed reaction is 3-amino-2-oxopropyl phosphate + 1-deoxy-D-xylulose 5-phosphate = pyridoxine 5'-phosphate + phosphate + 2 H2O + H(+). Its pathway is cofactor biosynthesis; pyridoxine 5'-phosphate biosynthesis; pyridoxine 5'-phosphate from D-erythrose 4-phosphate: step 5/5. In terms of biological role, catalyzes the complicated ring closure reaction between the two acyclic compounds 1-deoxy-D-xylulose-5-phosphate (DXP) and 3-amino-2-oxopropyl phosphate (1-amino-acetone-3-phosphate or AAP) to form pyridoxine 5'-phosphate (PNP) and inorganic phosphate. This Pseudomonas paraeruginosa (strain DSM 24068 / PA7) (Pseudomonas aeruginosa (strain PA7)) protein is Pyridoxine 5'-phosphate synthase.